A 431-amino-acid chain; its full sequence is MPQLTKSAELFEKAKKFIPGGVNSPVRAFKSVGGTPVYMAKGSGAYMTDVDGNTYLDYVGSWGPFILGSMHPRITAALEYTLKNIGTSFGTPIEMEIEIAELLCKIVPSLEMVRMVNSGTEATMSAVRLARGYTGRDKIIKFEGCYHGHGDSFLIKAGSGALTLGAPDSPGVTKGTAMDTLNATYNDIDSVKLLVNENKGQIAAIIIEPVAGNTGVIPAKPGFLAALRELCTEEGIVLIFDEVMCGFRVALGGAQSLYGVTPDLTTMGKIIGGGLPVGAFGGKREIMERVAPLGDVYQAGTLSGNPLALTAGLETLKILIDENPYPELERKAVILESGFNDNLKKLGLNYVQNRVGSMSCLFFTETPVVDYSTAVTADTKRHGKYFHSMLDQGIYLAPSQFEAMFISFMHTDEDLEKTIKANYNALVASGQ.

Lys269 bears the N6-(pyridoxal phosphate)lysine mark.

It belongs to the class-III pyridoxal-phosphate-dependent aminotransferase family. HemL subfamily. Homodimer. It depends on pyridoxal 5'-phosphate as a cofactor.

It is found in the cytoplasm. The catalysed reaction is (S)-4-amino-5-oxopentanoate = 5-aminolevulinate. It participates in porphyrin-containing compound metabolism; protoporphyrin-IX biosynthesis; 5-aminolevulinate from L-glutamyl-tRNA(Glu): step 2/2. It functions in the pathway porphyrin-containing compound metabolism; chlorophyll biosynthesis. This chain is Glutamate-1-semialdehyde 2,1-aminomutase, found in Pelodictyon phaeoclathratiforme (strain DSM 5477 / BU-1).